Reading from the N-terminus, the 569-residue chain is Proline--tRNA ligase (569 aa).

The protein belongs to the class-II aminoacyl-tRNA synthetase family. ProS type 1 subfamily. As to quaternary structure, homodimer.

Its subcellular location is the cytoplasm. It catalyses the reaction tRNA(Pro) + L-proline + ATP = L-prolyl-tRNA(Pro) + AMP + diphosphate. In terms of biological role, catalyzes the attachment of proline to tRNA(Pro) in a two-step reaction: proline is first activated by ATP to form Pro-AMP and then transferred to the acceptor end of tRNA(Pro). As ProRS can inadvertently accommodate and process non-cognate amino acids such as alanine and cysteine, to avoid such errors it has two additional distinct editing activities against alanine. One activity is designated as 'pretransfer' editing and involves the tRNA(Pro)-independent hydrolysis of activated Ala-AMP. The other activity is designated 'posttransfer' editing and involves deacylation of mischarged Ala-tRNA(Pro). The misacylated Cys-tRNA(Pro) is not edited by ProRS. The sequence is that of Proline--tRNA ligase from Colwellia psychrerythraea (strain 34H / ATCC BAA-681) (Vibrio psychroerythus).